The following is a 261-amino-acid chain: 2,3-dihydro-2,3-dihydroxybenzoate dehydrogenase (261 aa).

12–36 (FITGAAQGIGEAVARTLASQGAHIA) contacts NAD(+). Ser-144 is a binding site for substrate. Tyr-157 serves as the catalytic Proton acceptor.

It belongs to the short-chain dehydrogenases/reductases (SDR) family.

The protein localises to the cytoplasm. It catalyses the reaction (2S,3S)-2,3-dihydroxy-2,3-dihydrobenzoate + NAD(+) = 2,3-dihydroxybenzoate + NADH + H(+). It participates in siderophore biosynthesis; bacillibactin biosynthesis. This Bacillus subtilis (strain 168) protein is 2,3-dihydro-2,3-dihydroxybenzoate dehydrogenase (dhbA).